A 424-amino-acid polypeptide reads, in one-letter code: MQRDEQIFDLIQEEKDRQIHGLELIASENFVSDEVMEAAGSVLTNKYAEGYPGKRYYGGCEVVDVIEQIAIDRAKELFGAEYANVQPHSGSQANTAVYHACLNPGDTILGFDLSHGGHLTHGSPVNFSGRLYRPVFYGVDAETGRLDYDKIQEIATKEQPKLIIAGASAYSRDMDFARFRQIADSVGAILFADISHPAGLIAKGLLSDPIPHCHIVSTTTHKTLRGPRGGLILMGKDFPNPQGLTTPKGEIRMMSSLLDLAVFPGNQGGPLMHIIAAKAVAFGEALKDEFFTYAMQLQKNANAMADAFVKRGYNIISGGTDNHMMLIDLRNKNISGKEAENALVKAEITVNKNMVPFDDKSPFITSGIRVGTAAITTRGLVEKDMETIVALIDKVLTNHTNEDVIEEVAEEVNELMSERPIFAY.

(6S)-5,6,7,8-tetrahydrofolate is bound by residues Leu113 and 117–119 (GHL). The residue at position 222 (Lys222) is an N6-(pyridoxal phosphate)lysine. 361 to 363 (SPF) contacts (6S)-5,6,7,8-tetrahydrofolate.

The protein belongs to the SHMT family. As to quaternary structure, homodimer. Pyridoxal 5'-phosphate is required as a cofactor.

It is found in the cytoplasm. It carries out the reaction (6R)-5,10-methylene-5,6,7,8-tetrahydrofolate + glycine + H2O = (6S)-5,6,7,8-tetrahydrofolate + L-serine. It functions in the pathway one-carbon metabolism; tetrahydrofolate interconversion. It participates in amino-acid biosynthesis; glycine biosynthesis; glycine from L-serine: step 1/1. Functionally, catalyzes the reversible interconversion of serine and glycine with tetrahydrofolate (THF) serving as the one-carbon carrier. This reaction serves as the major source of one-carbon groups required for the biosynthesis of purines, thymidylate, methionine, and other important biomolecules. Also exhibits THF-independent aldolase activity toward beta-hydroxyamino acids, producing glycine and aldehydes, via a retro-aldol mechanism. The polypeptide is Serine hydroxymethyltransferase (Flavobacterium johnsoniae (strain ATCC 17061 / DSM 2064 / JCM 8514 / BCRC 14874 / CCUG 350202 / NBRC 14942 / NCIMB 11054 / UW101) (Cytophaga johnsonae)).